The following is a 206-amino-acid chain: Anti-sigma-W factor RsiW (206 aa).

The Cytoplasmic portion of the chain corresponds to 1-87 (MSCPEHIVQL…ASINRWLKAH (87 aa)). 3 residues coordinate Zn(2+): His30, Cys34, and Cys37. The helical transmembrane segment at 88-108 (PFLVAAALFAILMGGSFFSSW) threads the bilayer. Topologically, residues 109 to 206 (KNDHDFSVSS…SVFGVKESKE (98 aa)) are extracellular.

Belongs to the zinc-associated anti-sigma factor (ZAS) superfamily. Anti-sigma-W factor family. Requires Zn(2+) as cofactor. Post-translationally, is processed by three successive proteolytic events. First, the extracellular region of RsiW is cleaved by PrsW (Site-1 cleavage) in response to cell envelope stresses. Next, it undergoes cleavage at an intramembrane site (Site-2 cleavage) mediated by RasP. This cleavage uncovers a cryptic proteolytic tag with conserved alanine residues in the transmembrane segment, that is recognized mainly by the ClpXP protease, which completely degrades the protein in the cytoplasm and leads to the induction of the sigma-W-controlled genes.

It is found in the membrane. In terms of biological role, is the anti-sigma factor for SigW. The presence of RsiW leads to the inactivation of SigW, and its proteolytic destruction to sigma-W activation. The protein is Anti-sigma-W factor RsiW (rsiW) of Bacillus licheniformis (strain ATCC 14580 / DSM 13 / JCM 2505 / CCUG 7422 / NBRC 12200 / NCIMB 9375 / NCTC 10341 / NRRL NRS-1264 / Gibson 46).